The chain runs to 629 residues: Natural resistance-associated macrophage protein 2 homolog (629 aa).

Residues 1-151 are Cytoplasmic-facing; that stretch reads MNNNNNNKKL…KSKFSIKKLK (151 aa). The interval 50-119 is disordered; the sequence is NVVNGSIEDS…SDIDSSGDSI (70 aa). Residues 62 to 85 show a composition bias toward low complexity; it reads QQQQQQQQQQQQQQQQQQQQQQQQ. Positions 96–105 are enriched in basic and acidic residues; that stretch reads DKPFQDRDSN. Low complexity predominate over residues 106 to 118; sequence IGDGSDIDSSGDS. The helical transmembrane segment at 152–172 threads the bilayer; the sequence is SFLGPALFISVGYMDPGNWAT. At 173-182 the chain is on the extracellular side; the sequence is DLEGGSRFGY. Residues 183 to 203 traverse the membrane as a helical segment; sequence QLMWVLLFSNIMALFLQTLVI. Topologically, residues 204 to 224 are cytoplasmic; sequence KLALVTKNDLAQQCRKEYSKT. Residues 225–245 traverse the membrane as a helical segment; that stretch reads VNIFLWLILELAIISTDLAEV. At 246 to 253 the chain is on the extracellular side; that stretch reads IGTAIGLN. The chain crosses the membrane as a helical span at residues 254-274; that stretch reads ILFGLPLIAGVAITSLDTLLF. The Cytoplasmic segment spans residues 275–286; it reads LAIQRWGIRKLE. A helical transmembrane segment spans residues 287 to 307; it reads LLILLLLSMITMCFVIELFLS. Over 308 to 326 the chain is Extracellular; it reads KPIASEVFSGFVPRLNSDS. A helical transmembrane segment spans residues 327 to 347; the sequence is VMVATGIVGATTMPHNLFLHG. Topologically, residues 348-376 are cytoplasmic; it reads SVVKSRKIPNDRRKSVIKQAYRYNVIDTV. The chain crosses the membrane as a helical span at residues 377 to 397; sequence LALNCAFFVNIAILMLAASVF. The Extracellular segment spans residues 398 to 421; it reads WKSNIQVTELSEAYRLLTKLMDGK. A helical transmembrane segment spans residues 422–442; it reads LAAVLFGLGLFLAGQSSTITG. Over 443–468 the chain is Cytoplasmic; that stretch reads TMAGQIVMEGFIKLRIKPWLRRFITR. The helical transmembrane segment at 469–489 threads the bilayer; it reads LLAIIPAAIVIIVLGDKGTYT. The Extracellular segment spans residues 490-491; the sequence is LL. The chain crosses the membrane as a helical span at residues 492 to 512; it reads IISQVLLSIGLPFAVVPLIIF. At 513–527 the chain is on the cytoplasmic side; it reads TSSYEIMGEFKNRLS. Residues 528–548 traverse the membrane as a helical segment; sequence IIIINSIIALFIIGLNLATIF. Residues 549–565 are Extracellular-facing; sequence QLINDFLHNDSIISKCL. Asn-557 carries an N-linked (GlcNAc...) asparagine glycan. The chain crosses the membrane as a helical span at residues 566 to 586; sequence TIIFLIPLSIALCCLLLWLII. Over 587–629 the chain is Cytoplasmic; the sequence is SKINFFTNLLSKIFNNNNNNNNKNIINNNNNYSGNTINNQTIQ.

This sequence belongs to the NRAMP family.

It localises to the cell membrane. Functionally, divalent transition metal (iron and manganese) transporter. This chain is Natural resistance-associated macrophage protein 2 homolog (nramp2), found in Dictyostelium discoideum (Social amoeba).